The chain runs to 357 residues: UDP-N-acetylglucosamine--N-acetylmuramyl-(pentapeptide) pyrophosphoryl-undecaprenol N-acetylglucosamine transferase (357 aa).

Residues 12-14 (TGG), Asn-124, Arg-163, Ser-191, Ile-245, 264-269 (ALTVSE), and Gln-290 each bind UDP-N-acetyl-alpha-D-glucosamine.

It belongs to the glycosyltransferase 28 family. MurG subfamily.

It localises to the cell inner membrane. The enzyme catalyses di-trans,octa-cis-undecaprenyl diphospho-N-acetyl-alpha-D-muramoyl-L-alanyl-D-glutamyl-meso-2,6-diaminopimeloyl-D-alanyl-D-alanine + UDP-N-acetyl-alpha-D-glucosamine = di-trans,octa-cis-undecaprenyl diphospho-[N-acetyl-alpha-D-glucosaminyl-(1-&gt;4)]-N-acetyl-alpha-D-muramoyl-L-alanyl-D-glutamyl-meso-2,6-diaminopimeloyl-D-alanyl-D-alanine + UDP + H(+). It participates in cell wall biogenesis; peptidoglycan biosynthesis. Functionally, cell wall formation. Catalyzes the transfer of a GlcNAc subunit on undecaprenyl-pyrophosphoryl-MurNAc-pentapeptide (lipid intermediate I) to form undecaprenyl-pyrophosphoryl-MurNAc-(pentapeptide)GlcNAc (lipid intermediate II). The protein is UDP-N-acetylglucosamine--N-acetylmuramyl-(pentapeptide) pyrophosphoryl-undecaprenol N-acetylglucosamine transferase of Nitrosospira multiformis (strain ATCC 25196 / NCIMB 11849 / C 71).